We begin with the raw amino-acid sequence, 332 residues long: Cytochrome c1, heme protein, mitochondrial (332 aa).

The transit peptide at 1–70 (MLARTCLRST…YYHLYGFASA (70 aa)) directs the protein to the mitochondrion. The Mitochondrial intermembrane portion of the chain corresponds to 71-277 (MTPAEEGLHA…AEPEMDDRKR (207 aa)). The Cytochrome c domain occupies 97 to 250 (QALRRGFQVY…GLVDYEDGTP (154 aa)). The heme c site is built by C110, C113, and H114. Positions 139–151 (EENEYDTEPNDQG) are enriched in acidic residues. Positions 139 to 162 (EENEYDTEPNDQGEIEKRPGKLSD) are disordered. M234 is a heme c binding site. The chain crosses the membrane as a helical span at residues 278-296 (MGMKVLVVTSVLFALSVYV). Topologically, residues 297–332 (KRYKWAWLKSRKIVYDPPKSPPPATNLALPQQRAKS) are mitochondrial matrix.

It belongs to the cytochrome c family. Component of the ubiquinol-cytochrome c oxidoreductase (cytochrome b-c1 complex, complex III, CIII), a multisubunit enzyme composed of 10 subunits. The complex is composed of 3 respiratory subunits cytochrome b (cob), cytochrome c1 (cyt-1) and Rieske protein (fes-1), 2 core protein subunits pep and ucr-1, and 5 low-molecular weight protein subunits qcr6, qcr7, qcr8, qcr9 and probably NCU16844/qcr10. The complex exists as an obligatory dimer and forms supercomplexes (SCs) in the inner mitochondrial membrane with NADH-ubiquinone oxidoreductase (complex I, CI) and cytochrome c oxidase (complex IV, CIV), resulting in different assemblies (supercomplexes SCI(1)III(2), SCIII(2)IV(1) and SCIII(2)IV(2) as well as higher order I(x)III(y)IV(z) megacomplexes). It depends on heme c as a cofactor.

Its subcellular location is the mitochondrion inner membrane. It carries out the reaction a quinol + 2 Fe(III)-[cytochrome c](out) = a quinone + 2 Fe(II)-[cytochrome c](out) + 2 H(+)(out). Its function is as follows. Component of the ubiquinol-cytochrome c oxidoreductase, a multisubunit transmembrane complex that is part of the mitochondrial electron transport chain which drives oxidative phosphorylation. The respiratory chain contains 3 multisubunit complexes succinate dehydrogenase (complex II, CII), ubiquinol-cytochrome c oxidoreductase (cytochrome b-c1 complex, complex III, CIII) and cytochrome c oxidase (complex IV, CIV), that cooperate to transfer electrons derived from NADH and succinate to molecular oxygen, creating an electrochemical gradient over the inner membrane that drives transmembrane transport and the ATP synthase. The cytochrome b-c1 complex catalyzes electron transfer from ubiquinol to cytochrome c, linking this redox reaction to translocation of protons across the mitochondrial inner membrane, with protons being carried across the membrane as hydrogens on the quinol. In the process called Q cycle, 2 protons are consumed from the matrix, 4 protons are released into the intermembrane space and 2 electrons are passed to cytochrome c. Cytochrome c1 is a catalytic core subunit containing a c-type heme. It transfers electrons from the [2Fe-2S] iron-sulfur cluster of the Rieske protein to cytochrome c. This is Cytochrome c1, heme protein, mitochondrial (cyt-1) from Neurospora crassa (strain ATCC 24698 / 74-OR23-1A / CBS 708.71 / DSM 1257 / FGSC 987).